A 98-amino-acid chain; its full sequence is uncharacterized protein (98 aa).

A signal peptide spans 1–23 (MKKMQSIVLALSLVLVAPMAAQA). Positions 68-98 (WHLHGPPPPPRHHKKAPHDHHGGHGPGKHHR) are disordered. A compositionally biased stretch (basic residues) spans 77–98 (PRHHKKAPHDHHGGHGPGKHHR).

To E.coli YpeC.

This is an uncharacterized protein from Escherichia coli (strain K12).